A 137-amino-acid polypeptide reads, in one-letter code: Peptide methionine sulfoxide reductase MsrB (137 aa).

The region spanning alanine 7–glycine 129 is the MsrB domain. Cysteine 46, cysteine 49, cysteine 95, and cysteine 98 together coordinate Zn(2+). The active-site Nucleophile is the cysteine 118.

The protein belongs to the MsrB Met sulfoxide reductase family. The cofactor is Zn(2+).

The enzyme catalyses L-methionyl-[protein] + [thioredoxin]-disulfide + H2O = L-methionyl-(R)-S-oxide-[protein] + [thioredoxin]-dithiol. This is Peptide methionine sulfoxide reductase MsrB from Escherichia coli O8 (strain IAI1).